The sequence spans 139 residues: D-ribose pyranase (139 aa).

The active-site Proton donor is the His20. Substrate contacts are provided by residues Asp28, His106, and 128–130 (YAN).

Belongs to the RbsD / FucU family. RbsD subfamily. In terms of assembly, homodecamer.

It localises to the cytoplasm. It catalyses the reaction beta-D-ribopyranose = beta-D-ribofuranose. It functions in the pathway carbohydrate metabolism; D-ribose degradation; D-ribose 5-phosphate from beta-D-ribopyranose: step 1/2. Functionally, catalyzes the interconversion of beta-pyran and beta-furan forms of D-ribose. This is D-ribose pyranase from Photorhabdus laumondii subsp. laumondii (strain DSM 15139 / CIP 105565 / TT01) (Photorhabdus luminescens subsp. laumondii).